Consider the following 587-residue polypeptide: Serine/threonine-protein phosphatase 2A 65 kDa regulatory subunit A gamma isoform (587 aa).

Serine 2 carries the post-translational modification N-acetylserine. HEAT repeat units lie at residues 2–42, 44–80, 81–119, 158–194, 197–235, 236–274, 276–313, 314–352, 353–391, 393–430, 432–469, 470–508, 509–547, and 549–586; these read SMVD…ALGE, RTRK…YVGG, VEYA…QMRE, DVLK…AATI, AHLK…LLEP, QDCV…AVGP, PTRT…ILNP, ELAI…VLGK, DATI…VIGI, LLSQ…QLGV, FFDE…EFGP, EWAM…VMGS, EITC…IVDQ, and VVEN…VMMS.

The protein belongs to the phosphatase 2A regulatory subunit A family. As to quaternary structure, PP2A consists of a common heterodimeric core enzyme, composed of a 36 kDa catalytic subunit (subunit C) and a 65 kDa constant regulatory subunit (subunit A), that associates with a variety of regulatory subunits such as subunits B (the R2/B/PR55/B55, R3/B''/PR72/PR130/PR59 and R5/B'/B56 families). Interacts with CHIP. Interacts with SRK2E/OST1. In terms of processing, ubiquitinated. CHIP-mediated ubiquitination enhances phosphatase activity after an abiotic stress such as low temperature or darkness. In terms of tissue distribution, expressed ubiquitously at stable levels. However, higher protein levels in roots and flowers (at protein level).

It is found in the cytoplasm. It localises to the cytosol. The protein resides in the nucleus. In terms of biological role, the A subunit of protein phosphatase 2A serves as a scaffolding molecule to coordinate the assembly of the catalytic subunit and a variable regulatory B subunit. Involved during developmental process such as seedling and floral developments. Seems to act as a negative regulator of PP2A catalytic activity. This Arabidopsis thaliana (Mouse-ear cress) protein is Serine/threonine-protein phosphatase 2A 65 kDa regulatory subunit A gamma isoform (PP2AA3).